The primary structure comprises 1717 residues: Protein MON2 homolog (1717 aa).

An N-acetylserine modification is found at Ser2. Ser205 and Ser537 each carry phosphoserine. A disordered region spans residues 511 to 538; that stretch reads ETECQTTTEEGSSPTQSTEQQDLQSTSD. Residues 522–538 show a composition bias toward polar residues; the sequence is SSPTQSTEQQDLQSTSD.

It belongs to the MON2 family. In terms of assembly, homooligomer. Heterotrimer with ATP9A and DOP1B; this interaction is retromer-independent. Interacts with SNX3.

It is found in the early endosome membrane. In terms of biological role, plays a role in regulating membrane trafficking of cargo proteins. Together with ATP9A and DOP1B, regulates SNX3 retromer-mediated endosomal sorting of WLS away from lysosomal degradation. This chain is Protein MON2 homolog, found in Homo sapiens (Human).